A 480-amino-acid chain; its full sequence is MAQNSVFFPDEFLAQMREALPAHLSFDAFIAACQRPLRRSIRVNTLKISVEDFLALVSPYRWQLTPVPWCAEGFWIEREDEDALPLGSTAEHLSGLFYIQEASSMLPVTALFAEDNQPERVMDVAAAPGSKTTQIAARMGNRGVILANEFSASRVKVLHANISRCGISNVALTHFDGRVFGAALPESFDAILLDAPCSGEGVVRKDPDALKNWSVASNLEIAATQRELIDSAFHALRPGGMLVYSTCTLNRDENESVCLWLKEQYPQAVEFLPLDSLFPSATEAVTPEGFLHVFPQIFDCEGFFVARMRKTAVIEPLPAPKYKVGNFPFAPLKGRETAQIVAAAQKAGLQWDENLRLWQRDKEIWLFPVEVETMIGKVRFSRIGMRLAEVHNKGYRWQHEAVIALANDANTFALTHTEAEEWYRGRDVYPELAPTSDEVVVTYQGFPLGLAKKIGSRLKNSYPRELVRDGRLFTVHDSAN.

S-adenosyl-L-methionine-binding positions include 125–131 (AAAPGSK), E149, D176, and D194. C247 acts as the Nucleophile in catalysis.

Belongs to the class I-like SAM-binding methyltransferase superfamily. RsmB/NOP family.

It is found in the cytoplasm. It catalyses the reaction cytidine(1407) in 16S rRNA + S-adenosyl-L-methionine = 5-methylcytidine(1407) in 16S rRNA + S-adenosyl-L-homocysteine + H(+). Its function is as follows. Specifically methylates the cytosine at position 1407 (m5C1407) of 16S rRNA. The protein is Ribosomal RNA small subunit methyltransferase F of Enterobacter sp. (strain 638).